The chain runs to 881 residues: Alanine--tRNA ligase (881 aa).

His-565, His-569, Cys-672, and His-676 together coordinate Zn(2+).

It belongs to the class-II aminoacyl-tRNA synthetase family. Requires Zn(2+) as cofactor.

It localises to the cytoplasm. The catalysed reaction is tRNA(Ala) + L-alanine + ATP = L-alanyl-tRNA(Ala) + AMP + diphosphate. Catalyzes the attachment of alanine to tRNA(Ala) in a two-step reaction: alanine is first activated by ATP to form Ala-AMP and then transferred to the acceptor end of tRNA(Ala). Also edits incorrectly charged Ser-tRNA(Ala) and Gly-tRNA(Ala) via its editing domain. This chain is Alanine--tRNA ligase, found in Novosphingobium aromaticivorans (strain ATCC 700278 / DSM 12444 / CCUG 56034 / CIP 105152 / NBRC 16084 / F199).